We begin with the raw amino-acid sequence, 425 residues long: Serine--tRNA ligase (425 aa).

Disordered stretches follow at residues 43–68 (QRSS…GSDP) and 108–131 (LPNL…RHCW). The segment covering 117-131 (PEGRDENDNQERHCW) has biased composition (basic and acidic residues). 233–235 (TAE) contacts L-serine. ATP is bound at residue 264–266 (RRE). An L-serine-binding site is contributed by E287. 351 to 354 (EISS) provides a ligand contact to ATP. An L-serine-binding site is contributed by S385.

This sequence belongs to the class-II aminoacyl-tRNA synthetase family. Type-1 seryl-tRNA synthetase subfamily. Homodimer. The tRNA molecule binds across the dimer.

It is found in the cytoplasm. The enzyme catalyses tRNA(Ser) + L-serine + ATP = L-seryl-tRNA(Ser) + AMP + diphosphate + H(+). It catalyses the reaction tRNA(Sec) + L-serine + ATP = L-seryl-tRNA(Sec) + AMP + diphosphate + H(+). The protein operates within aminoacyl-tRNA biosynthesis; selenocysteinyl-tRNA(Sec) biosynthesis; L-seryl-tRNA(Sec) from L-serine and tRNA(Sec): step 1/1. Its function is as follows. Catalyzes the attachment of serine to tRNA(Ser). Is also able to aminoacylate tRNA(Sec) with serine, to form the misacylated tRNA L-seryl-tRNA(Sec), which will be further converted into selenocysteinyl-tRNA(Sec). The protein is Serine--tRNA ligase of Prochlorococcus marinus (strain MIT 9303).